The sequence spans 299 residues: Oxygen-dependent coproporphyrinogen-III oxidase (299 aa).

S92 serves as a coordination point for substrate. H96 and H106 together coordinate a divalent metal cation. The Proton donor role is filled by H106. Residue N108–R110 coordinates substrate. Residues H145 and H175 each contribute to the a divalent metal cation site. Residues Y240–E275 are important for dimerization. G258–R260 serves as a coordination point for substrate.

The protein belongs to the aerobic coproporphyrinogen-III oxidase family. Homodimer. A divalent metal cation is required as a cofactor.

It localises to the cytoplasm. The enzyme catalyses coproporphyrinogen III + O2 + 2 H(+) = protoporphyrinogen IX + 2 CO2 + 2 H2O. It functions in the pathway porphyrin-containing compound metabolism; protoporphyrin-IX biosynthesis; protoporphyrinogen-IX from coproporphyrinogen-III (O2 route): step 1/1. Involved in the heme biosynthesis. Catalyzes the aerobic oxidative decarboxylation of propionate groups of rings A and B of coproporphyrinogen-III to yield the vinyl groups in protoporphyrinogen-IX. This is Oxygen-dependent coproporphyrinogen-III oxidase from Salmonella choleraesuis (strain SC-B67).